The sequence spans 430 residues: Argininosuccinate lyase (430 aa).

The protein belongs to the lyase 1 family. Argininosuccinate lyase subfamily.

It is found in the cytoplasm. It carries out the reaction 2-(N(omega)-L-arginino)succinate = fumarate + L-arginine. It participates in amino-acid biosynthesis; L-arginine biosynthesis; L-arginine from L-ornithine and carbamoyl phosphate: step 3/3. The polypeptide is Argininosuccinate lyase (Sorangium cellulosum (strain So ce56) (Polyangium cellulosum (strain So ce56))).